A 399-amino-acid polypeptide reads, in one-letter code: Enoyl-[acyl-carrier-protein] reductase [NADH] (399 aa).

Residues 48–53 (GASTGY), 74–75 (FE), 111–112 (DA), and 139–140 (LA) each bind NAD(+). Y225 provides a ligand contact to substrate. Y235 acts as the Proton donor in catalysis. NAD(+) is bound by residues K244 and 274 to 276 (VVT).

This sequence belongs to the TER reductase family. Monomer.

It catalyses the reaction a 2,3-saturated acyl-[ACP] + NAD(+) = a (2E)-enoyl-[ACP] + NADH + H(+). It functions in the pathway lipid metabolism; fatty acid biosynthesis. In terms of biological role, involved in the final reduction of the elongation cycle of fatty acid synthesis (FAS II). Catalyzes the reduction of a carbon-carbon double bond in an enoyl moiety that is covalently linked to an acyl carrier protein (ACP). The polypeptide is Enoyl-[acyl-carrier-protein] reductase [NADH] (Yersinia pseudotuberculosis serotype O:1b (strain IP 31758)).